The sequence spans 265 residues: V0 assembly protein 1 (265 aa).

Residues 1 to 24 (MVFGQLYALFIFTLSCCISKTVQA) form the signal peptide. Topologically, residues 25-223 (DSSKESSSFI…ILSSIWTEGL (199 aa)) are vacuolar. N-linked (GlcNAc...) asparagine glycans are attached at residues Asn-69, Asn-104, and Asn-172. The helical transmembrane segment at 224-244 (LMCLIVSALLLFILIVALSWI) threads the bilayer. Residues 245–265 (SNLDITYGALEKSTNPIKKNN) lie on the Cytoplasmic side of the membrane. The ER retention motif signature appears at 262–265 (KKNN).

It belongs to the VOA1 family. V-ATPase is a heteromultimeric enzyme composed of a peripheral catalytic V1 complex (components A to H) attached to an integral membrane V0 proton pore complex (components: a, c, c', c'', d, e, f and VOA1). Interacts with VMA21. Associates with the assembling V0 complex.

The protein resides in the vacuole membrane. It localises to the endoplasmic reticulum membrane. Functionally, accessory component of the V0 complex of vacuolar(H+)-ATPase (V-ATPase), a multisubunit enzyme composed of a peripheral complex (V1) that hydrolyzes ATP and a membrane integral complex (V0) that translocates protons. V-ATPase is responsible for acidifying and maintaining the pH of intracellular compartments. Functions with VMA21 in assembly of the V0 complex. This Saccharomyces cerevisiae (strain ATCC 204508 / S288c) (Baker's yeast) protein is V0 assembly protein 1 (VOA1).